The sequence spans 358 residues: METVESSSSAELLRAQMHFSTQLFGFHYTAALKCAVKLGIPDAIKQHGKPMNLSELNSALSINPSKAPCIHRLMRILVTAGYFAQENECFSLTSAGRHFLKDDPLNIRALVLLELHPALVKPWIALGEWFQNDDVSPFATAHGKSFWDYVTSDPELRKLFDESMADDSQLIAKALVTEFRYVFEGLKSLVDVGGGSGTLARAIAKAFPNLKCTVCDLPDAVANEHGDGNLDFVAGDMFERVPSADSILLKHILHDWSDEKCVEILKKCREAIPKNGGKVIIVDKLLKNRGHGHAENEHDEATESPLSCDMEMLVLVNGKERDEKEWAKLFSGAGFNDYKYNITPVLGSTSLIEVNFYN.

S-adenosyl-L-methionine contacts are provided by G193, D216, D236, M237, and K250. H254 acts as the Proton acceptor in catalysis.

This sequence belongs to the class I-like SAM-binding methyltransferase superfamily. Cation-independent O-methyltransferase family. Expressed in roots.

The protein resides in the cytoplasm. It is found in the cytosol. The enzyme catalyses (S)-reticuline + S-adenosyl-L-methionine = (S)-laudanine + S-adenosyl-L-homocysteine + H(+). The protein operates within alkaloid biosynthesis. Its function is as follows. O-methyltransferase involved in the biosynthesis of ipecac and benzylisoquinoline monoterpenoid-isoquinoline alkaloids natural products, starting by the condensation of dopamine and secologanin, and including emetine and cephaeline, drugs used both as anti-protozoal (e.g. treatment of ameobiasis) and as emetic agents. Catalyzes 2-O-methylation of 3-O-methylredipecamine and, with less efficiency, the 7-O-methylation of (S)-coclaurine, (R,S)-N-methylcoclaurine, (R,S)-4'-O-methylcoclaurine, (R,S)-6-O-methyllaudanosoline, nororientaline, (S)-norreticuline and (S)-reticuline. This Carapichea ipecacuanha (Ipecac) protein is 3-O-methylredipecamine 2-O-methyltransferase IpeOMT3.